An 85-amino-acid chain; its full sequence is uncharacterized protein (85 aa).

This is an uncharacterized protein from Shigella flexneri.